The following is a 734-amino-acid chain: Sulfate transporter (734 aa).

Polar residues predominate over residues 1 to 11; it reads MSLKNGEQNDL. Positions 1–38 are disordered; sequence MSLKNGEQNDLSPKDSVKGNDQYRSPSGIHVEHEEESR. A phosphoserine mark is found at Ser-12 and Ser-16. The next 2 helical transmembrane spans lie at 113-133 and 138-158; these read MMSGLIVGILLVPQSIAYSLL and PIYGLYTSFFASLIYFILGTS. N-linked (GlcNAc...) asparagine glycans are attached at residues Asn-194 and Asn-204. 8 helical membrane passes run 222–242, 247–267, 269–289, 292–312, 379–399, 415–435, 453–473, and 519–539; these read FVAGVYQVAMGFFQVGFVSVY, LLGGFVTGASFTILTSQVKYL, GLSLPRSGGVGSLITTWIHIF, IHKTNICDLITSLLCLLVLLP, VDAIAIAIIGFAITVSLSEMF, AIGFCNIIPSFFHSFTTSAAL, VMTALVLLLVLLVIAPLFFSL, and LISTEIGLLTGVCFSMFCVIL. The STAS domain occupies 563 to 714; sequence AYKNLQAKSG…YSVYEAMTFA (152 aa).

It belongs to the SLC26A/SulP transporter (TC 2.A.53) family. N-glycosylated.

It localises to the cell membrane. It is found in the apical cell membrane. The enzyme catalyses oxalate(in) + sulfate(out) = oxalate(out) + sulfate(in). The catalysed reaction is sulfate(out) + 2 chloride(in) = sulfate(in) + 2 chloride(out). It catalyses the reaction oxalate(out) + 2 chloride(in) = oxalate(in) + 2 chloride(out). It carries out the reaction bromide(in) + chloride(out) = bromide(out) + chloride(in). The enzyme catalyses nitrate(in) + chloride(out) = nitrate(out) + chloride(in). The catalysed reaction is iodide(in) + chloride(out) = iodide(out) + chloride(in). Sulfate transporter which mediates sulfate uptake into chondrocytes in order to maintain adequate sulfation of proteoglycans which is needed for cartilage development. Mediates electroneutral anion exchange of sulfate ions for oxalate ions, sulfate and oxalate ions for chloride and/or hydroxyl ions and chloride ions for bromide, iodide and nitrate ions. The coupling of sulfate transport to both hydroxyl and chloride ions likely serves to ensure transport at both acidic pH when most sulfate uptake is mediated by sulfate-hydroxide exchange and alkaline pH when most sulfate uptake is mediated by sulfate-chloride exchange. Essential for chondrocyte proliferation, differentiation and cell size expansion. This chain is Sulfate transporter (SLC26A2), found in Ovis aries (Sheep).